The primary structure comprises 189 residues: Translation initiation factor IF-3 (189 aa).

This sequence belongs to the IF-3 family. In terms of assembly, monomer.

The protein resides in the cytoplasm. IF-3 binds to the 30S ribosomal subunit and shifts the equilibrium between 70S ribosomes and their 50S and 30S subunits in favor of the free subunits, thus enhancing the availability of 30S subunits on which protein synthesis initiation begins. The chain is Translation initiation factor IF-3 from Corynebacterium glutamicum (strain ATCC 13032 / DSM 20300 / JCM 1318 / BCRC 11384 / CCUG 27702 / LMG 3730 / NBRC 12168 / NCIMB 10025 / NRRL B-2784 / 534).